Here is a 252-residue protein sequence, read N- to C-terminus: 3-dehydroquinate dehydratase (252 aa).

Residues Ser-21, 46-48 (EWR), and Arg-82 each bind 3-dehydroquinate. The active-site Proton donor/acceptor is the His-143. Lys-170 serves as the catalytic Schiff-base intermediate with substrate. 3-dehydroquinate is bound by residues Arg-213, Ser-232, and Gln-236.

The protein belongs to the type-I 3-dehydroquinase family. Homodimer.

The catalysed reaction is 3-dehydroquinate = 3-dehydroshikimate + H2O. Its pathway is metabolic intermediate biosynthesis; chorismate biosynthesis; chorismate from D-erythrose 4-phosphate and phosphoenolpyruvate: step 3/7. In terms of biological role, involved in the third step of the chorismate pathway, which leads to the biosynthesis of aromatic amino acids. Catalyzes the cis-dehydration of 3-dehydroquinate (DHQ) and introduces the first double bond of the aromatic ring to yield 3-dehydroshikimate. This Escherichia coli O8 (strain IAI1) protein is 3-dehydroquinate dehydratase.